The sequence spans 346 residues: Golgi to ER traffic protein 4 (346 aa).

Residues 317 to 346 (GQNQGGSRRTPQGRSQSKTVEAPPASMELD) are disordered. Residues 321 to 335 (GGSRRTPQGRSQSKT) show a composition bias toward polar residues.

This sequence belongs to the GET4 family. In terms of assembly, component of the get4/get5/sgt2 sorting complex.

It localises to the cytoplasm. Its function is as follows. Component of the get4/get5/sgt2 sorting complex involved in the GET (guided entry of TA proteins) pathway that leads to the insertion of tail-anchored (TA) proteins into the endoplasmic reticulum. Get4 and get5 form an obligate complex that catalyzes the transfer of tail-anchored proteins destined to the endoplasmic reticulum from sgt2 to the cytosolic targeting factor which then targets the TA protein to the ER membrane via get1/get2. This Aspergillus fumigatus (strain ATCC MYA-4609 / CBS 101355 / FGSC A1100 / Af293) (Neosartorya fumigata) protein is Golgi to ER traffic protein 4.